The following is a 696-amino-acid chain: Zinc finger SWIM domain-containing protein 3 (696 aa).

Residues 531 to 572 (VDVQLLEDSHQVSKDGCSCSCSFQQWYHLPCRHILALLHTSQ) form an SWIM-type zinc finger.

The sequence is that of Zinc finger SWIM domain-containing protein 3 (ZSWIM3) from Homo sapiens (Human).